The following is a 284-amino-acid chain: MATFIRFTAPLFCFFFLFSLFSHQTMSQPQHMATFCDDRLSDNFTQTSSYKANRETLLSSLRDRSSLGTYSNATIGLSPDTVYGMFLCRGDLTKTSCSDCVKTATLEITKNNNCTSRKTALIFYEECMVRYSNVSFFTLVELDGPYVAKYSLATFPTSLFSSFQQTLSNKVEQLIILIASKSSLSASTPYYVKDISRVNELEGSYTLDTVVQCSPDLDPANCGVCLRLVVKGLSGCCTNARFAQFYLSKCFLKYDTTGLPTSQSPSGSSSINVMKGEHNICPRL.

The first 27 residues, 1 to 27 (MATFIRFTAPLFCFFFLFSLFSHQTMS), serve as a signal peptide directing secretion. Gnk2-homologous domains are found at residues 32-136 (MATF…NVSF) and 151-259 (SLAT…TTGL).

Belongs to the cysteine-rich repeat secretory protein family.

It localises to the secreted. This is Cysteine-rich repeat secretory protein 8 (CRRSP8) from Arabidopsis thaliana (Mouse-ear cress).